A 593-amino-acid polypeptide reads, in one-letter code: Monoterpene synthase 7, chloroplastic (593 aa).

The transit peptide at Met-1 to Gln-39 directs the protein to the chloroplast. Residues Asp-348, Asp-352, Asp-491, and Glu-499 each coordinate Mg(2+). The short motif at Asp-348–Asp-352 is the DDXXD motif element.

This sequence belongs to the terpene synthase family. Tpsa subfamily. Mg(2+) is required as a cofactor. Requires Mn(2+) as cofactor. As to expression, highly expressed in flowers, petals and sepals, but almost undetectable in vegetative organs.

It is found in the plastid. The protein localises to the chloroplast. It carries out the reaction (2E)-geranyl diphosphate = sabinene + diphosphate. The catalysed reaction is (2E)-geranyl diphosphate = terpinolene + diphosphate. The enzyme catalyses (2E)-geranyl diphosphate = alpha-pinene + diphosphate. It catalyses the reaction (2E)-geranyl diphosphate = beta-pinene + diphosphate. It carries out the reaction (2E)-geranyl diphosphate = beta-myrcene + diphosphate. The catalysed reaction is (2E)-geranyl diphosphate = alpha-terpinene + diphosphate. The enzyme catalyses (2E)-geranyl diphosphate = beta-phellandrene + diphosphate. It catalyses the reaction (2E)-geranyl diphosphate = gamma-terpinene + diphosphate. It functions in the pathway secondary metabolite biosynthesis; terpenoid biosynthesis. In terms of biological role, monoterpene synthase involved in the biosynthesis of volatile compounds present in floral scent. Mediates the conversion of (2E)-geranyl diphosphate (GPP) into sabinene and sub-products such as alpha-thujene, alpha-pinene, beta-pinene, myrcene, alpha-phellandrene, alpha-terpinene, beta-phellandrene, gamma-terpinene and terpinolene. Unable to use farnesyl diphosphate (FPP) as substrate. The sequence is that of Monoterpene synthase 7, chloroplastic from Hedychium coronarium (White butterfly ginger-lily).